We begin with the raw amino-acid sequence, 828 residues long: Glycerol-3-phosphate acyltransferase (828 aa).

The short motif at 309–314 is the HXXXXD motif element; that stretch reads CHRSHI.

It belongs to the GPAT/DAPAT family.

It localises to the cell inner membrane. The enzyme catalyses sn-glycerol 3-phosphate + an acyl-CoA = a 1-acyl-sn-glycero-3-phosphate + CoA. It participates in phospholipid metabolism; CDP-diacylglycerol biosynthesis; CDP-diacylglycerol from sn-glycerol 3-phosphate: step 1/3. The protein is Glycerol-3-phosphate acyltransferase of Pseudomonas entomophila (strain L48).